The following is a 200-amino-acid chain: Phosphatidylethanolamine N-methyltransferase B (200 aa).

The Lumenal segment spans residues 1–8 (MEKGLSSD). An intramembrane region (helical) is located at residues 9–29 (LIIAFVAIVLHVVNYNVTAQF). At 30-39 (EYKTRYFTKL) the chain is on the lumenal side. A helical transmembrane segment spans residues 40 to 58 (IGRNAIYYYAVFLIISALI). The Cytoplasmic portion of the chain corresponds to 59–86 (RDHFINVAVLSDKDSIILFPTEIANMIG). Residues 87–107 (DSCFIFGILLNIWTLKALGIK) form a helical membrane-spanning segment. 91-93 (IFG) is an S-adenosyl-L-methionine binding site. The Lumenal portion of the chain corresponds to 108-150 (GMYNGDSFGHIMDSPVTGGPYQFFSDPQYVGTTIAALGVAIRN). A helical membrane pass occupies residues 151–171 (QSIYGFLCTILVGVVFYISAT). At 172-200 (FVETPHLKNIYSNRSYSKINFKNLKSLKN) the chain is on the cytoplasmic side. Position 174–175 (174–175 (ET)) interacts with S-adenosyl-L-methionine.

It belongs to the class VI-like SAM-binding methyltransferase superfamily. PEMT/PEM2 methyltransferase family.

The protein localises to the endoplasmic reticulum membrane. Its subcellular location is the mitochondrion membrane. The catalysed reaction is a 1,2-diacyl-sn-glycero-3-phospho-N-methylethanolamine + S-adenosyl-L-methionine = a 1,2-diacyl-sn-glycero-3-phospho-N,N-dimethylethanolamine + S-adenosyl-L-homocysteine + H(+). The enzyme catalyses a 1,2-diacyl-sn-glycero-3-phospho-N,N-dimethylethanolamine + S-adenosyl-L-methionine = a 1,2-diacyl-sn-glycero-3-phosphocholine + S-adenosyl-L-homocysteine + H(+). It carries out the reaction a 1,2-diacyl-sn-glycero-3-phosphoethanolamine + S-adenosyl-L-methionine = a 1,2-diacyl-sn-glycero-3-phospho-N-methylethanolamine + S-adenosyl-L-homocysteine + H(+). The protein operates within phospholipid metabolism; phosphatidylcholine biosynthesis. Its function is as follows. Catalyzes the three sequential steps of the methylation pathway of phosphatidylcholine biosynthesis, the SAM-dependent methylation of phosphatidylethanolamine (PE) to phosphatidylmonomethylethanolamine (PMME), PMME to phosphatidyldimethylethanolamine (PDME), and PDME to phosphatidylcholine (PC). The chain is Phosphatidylethanolamine N-methyltransferase B (pemtB) from Dictyostelium discoideum (Social amoeba).